The chain runs to 118 residues: Large ribosomal subunit protein bL20 (118 aa).

The protein belongs to the bacterial ribosomal protein bL20 family.

Functionally, binds directly to 23S ribosomal RNA and is necessary for the in vitro assembly process of the 50S ribosomal subunit. It is not involved in the protein synthesizing functions of that subunit. The polypeptide is Large ribosomal subunit protein bL20 (Desulfotalea psychrophila (strain LSv54 / DSM 12343)).